Consider the following 357-residue polypeptide: MKKKVAEYLNRLAEVEIKISNPEIFSNSKEYSALSKEHSYLLELKNAYDKILNLEKVLADDKQALAIEKDPEMVVMLEEGINENKVELEKLNKILESLLVPPDPDDDLNVIMELRAGTGGEEAALFVGDCVRMYHLYASSKGWKYEVLSASESDLKGYKEYVMGISGTGVKRLLQYEAGTHRVQRVPETETQGRVHTSAITIAVLPEPSEEDTELLINEKDLKIDTFRASGAGGQHVNVTDSAVRITHLPTGVVVTCQDERSQHKNKDKAMRILKARIRDAEMQKRHNEASAMRSAQVGSGDRSERIRTYNFSQNRVTDHRIGLTLYNLDKVMEGDLDPITTAMVSHAYHQLLEHGN.

Glutamine 235 is modified (N5-methylglutamine). The segment at 285–305 is disordered; it reads KRHNEASAMRSAQVGSGDRSE.

Belongs to the prokaryotic/mitochondrial release factor family. Methylated by PrmC. Methylation increases the termination efficiency of RF1.

The protein localises to the cytoplasm. Its function is as follows. Peptide chain release factor 1 directs the termination of translation in response to the peptide chain termination codons UAG and UAA. The polypeptide is Peptide chain release factor 1 (prfA) (Chlamydia pneumoniae (Chlamydophila pneumoniae)).